Consider the following 127-residue polypeptide: Snaclec CHH-B subunit alpha (127 aa).

Intrachain disulfides connect Cys4/Cys15, Cys32/Cys120, and Cys95/Cys112. In terms of domain architecture, C-type lectin spans 11–121; sequence YDRYCYKPFK…CEQQHSFICK (111 aa).

Belongs to the snaclec family. In terms of assembly, heterodimer of subunits alpha and beta; disulfide-linked. In terms of tissue distribution, expressed by the venom gland.

The protein localises to the secreted. In terms of biological role, binds to the subunit GPIbalpha (GP1BA) of the platelet GPIb/V/IX receptor system. It inhibits ristocetin- and vWF-induced platelet aggregation in platelet-rich plasma by inhibiting the binding of vWF to GPIbalpha. This is Snaclec CHH-B subunit alpha from Crotalus horridus (Timber rattlesnake).